The chain runs to 786 residues: Endonuclease MutS2 (786 aa).

An ATP-binding site is contributed by 335 to 342 (GPNTGGKT). One can recognise a Smr domain in the interval 711-786 (LDLRGERFEN…GLGVTVVELK (76 aa)).

This sequence belongs to the DNA mismatch repair MutS family. MutS2 subfamily. As to quaternary structure, homodimer. Binds to stalled ribosomes, contacting rRNA.

In terms of biological role, endonuclease that is involved in the suppression of homologous recombination and thus may have a key role in the control of bacterial genetic diversity. Acts as a ribosome collision sensor, splitting the ribosome into its 2 subunits. Detects stalled/collided 70S ribosomes which it binds and splits by an ATP-hydrolysis driven conformational change. Acts upstream of the ribosome quality control system (RQC), a ribosome-associated complex that mediates the extraction of incompletely synthesized nascent chains from stalled ribosomes and their subsequent degradation. Probably generates substrates for RQC. This chain is Endonuclease MutS2, found in Bacillus cereus (strain Q1).